A 343-amino-acid polypeptide reads, in one-letter code: Ribosomal RNA-processing protein 8 (343 aa).

A disordered region spans residues 1–123 (MGKKRKITDE…NDDVAAAPEE (123 aa)). A compositionally biased stretch (basic and acidic residues) spans 7–33 (ITDEKDAQHVPAEKREKVENWLKKSTE). 2 stretches are compositionally biased toward basic residues: residues 45 to 59 (KKKR…KLAA) and 89 to 101 (KKKR…KKKF). Residues 112-123 (TENDDVAAAPEE) are compositionally biased toward acidic residues. S-adenosyl-L-methionine-binding residues include His169, Gly204, Asp224, Asp236, Met237, and Cys253.

It belongs to the methyltransferase superfamily. RRP8 family.

Its subcellular location is the nucleus. The protein resides in the nucleolus. In terms of biological role, probable methyltransferase required to silence rDNA. Involved in regulation of antisense ribosomal siRNA production. Required for the N1-methyladenosine modification of 26S rRNAs. In Caenorhabditis elegans, this protein is Ribosomal RNA-processing protein 8 (rrp-8).